Consider the following 258-residue polypeptide: MIEFKNVSLVYPNGTQGLKDVNLKINEGEFVVIVGLSGAGKSTLIRSMNRLVTPTEGELLIDGENILPYSSRQLRKLRTKVGMIFQNYNLVKRSSVMKNVISGRLGHVGTFASLLNLYPKEDVALAYRSLQRVNIAEKVYQRADQLSGGQQQRVAIARVLTQQPKIILADEPVASLDPPTSHQVMTYLRKINKEDKITTIVNLHFIDMAMEYADRIIGMRAGEVVFDGPASDVSEETFEEIYGRKIREDDLVGGQDNE.

The ABC transporter domain occupies 2-246 (IEFKNVSLVY…TFEEIYGRKI (245 aa)). 35–42 (GLSGAGKS) contacts ATP.

It belongs to the ABC transporter superfamily. Phosphonates importer (TC 3.A.1.9.1) family. The complex is composed of two ATP-binding proteins (PhnC), two transmembrane proteins (PhnE) and a solute-binding protein (PhnD).

The protein resides in the cell membrane. The catalysed reaction is phosphonate(out) + ATP + H2O = phosphonate(in) + ADP + phosphate + H(+). Its function is as follows. Part of the ABC transporter complex PhnCDE involved in phosphonates import. Responsible for energy coupling to the transport system. This chain is Phosphonates import ATP-binding protein PhnC 3, found in Halalkalibacterium halodurans (strain ATCC BAA-125 / DSM 18197 / FERM 7344 / JCM 9153 / C-125) (Bacillus halodurans).